Here is a 178-residue protein sequence, read N- to C-terminus: Putative type II secretion system M-type protein YghD (178 aa).

Topologically, residues 1-39 (MLRDKFIHYFQQWRERQLSRGEHWLAQHLAGRSPREKGM) are cytoplasmic. A helical transmembrane segment spans residues 40–60 (LLAAVVFLFSVGYYVLIWQPL). Residues 61–178 (SERIEQQETI…NVQRLEFGRG (118 aa)) lie on the Periplasmic side of the membrane.

Belongs to the GSP M family.

Its subcellular location is the cell inner membrane. Its function is as follows. Involved in a type II secretion system (T2SS, formerly general secretion pathway, GSP) for the export of folded proteins across the outer membrane. This is Putative type II secretion system M-type protein YghD (yghD) from Escherichia coli (strain K12).